The sequence spans 430 residues: Neuropeptide FF receptor 1 (430 aa).

Residues 1–20 (MEGEPSQPPNSSWPLSQNGT) are disordered. At 1–43 (MEGEPSQPPNSSWPLSQNGTNTEATPATNLTFSSYYQHTSPVA) the chain is on the extracellular side. Residues 9-20 (PNSSWPLSQNGT) show a composition bias toward polar residues. Asn10, Asn18, and Asn29 each carry an N-linked (GlcNAc...) asparagine glycan. A helical membrane pass occupies residues 44-64 (AMFIVAYALIFLLCMVGNTLV). The Cytoplasmic segment spans residues 65–80 (CFIVLKNRHMHTVTNM). A helical membrane pass occupies residues 81–101 (FILNLAVSDLLVGIFCMPTTL). Over 102–117 (VDNLITGWPFDNATCK) the chain is Extracellular. The N-linked (GlcNAc...) asparagine glycan is linked to Asn113. Residues Cys116 and Cys203 are joined by a disulfide bond. The chain crosses the membrane as a helical span at residues 118-138 (MSGLVQGMSVSASVFTLVAIA). The Cytoplasmic portion of the chain corresponds to 139-158 (VERFRCIVHPFREKLTLRKA). A helical membrane pass occupies residues 159 to 179 (LVTIAVIWALALLIMCPSAVT). Residues 180–214 (LTVTREEHHFMVDARNRSYPLYSCWEAWPEKGMRR) lie on the Extracellular side of the membrane. The N-linked (GlcNAc...) asparagine glycan is linked to Asn195. A helical transmembrane segment spans residues 215-235 (VYTTVLFSHIYLAPLALIVVM). Residues 236-271 (YARIARKLCQAPGPAPGGEEAADPRASRRRARVVHM) are Cytoplasmic-facing. Residues 272 to 292 (LVMVALFFTLSWLPLWALLLL) form a helical membrane-spanning segment. Over 293–307 (IDYGQLSAPQLHLVT) the chain is Extracellular. The helical transmembrane segment at 308–328 (VYAFPFAHWLAFFNSSANPII) threads the bilayer. Topologically, residues 329 to 430 (YGYFNENFRR…LPLTIPAWDI (102 aa)) are cytoplasmic. The span at 379-404 (SDSGLPSESGPSSGAPRPGRLPLRNG) shows a compositional bias: low complexity. Residues 379 to 413 (SDSGLPSESGPSSGAPRPGRLPLRNGRVAHHGLPR) are disordered.

It belongs to the G-protein coupled receptor 1 family.

The protein resides in the cell membrane. Functionally, receptor for NPAF (A-18-F-amide) and NPFF (F-8-F-amide) neuropeptides, also known as morphine-modulating peptides. Can also be activated by a variety of naturally occurring or synthetic FMRF-amide like ligands. This receptor mediates its action by association with G proteins that activate a phosphatidylinositol-calcium second messenger system. This is Neuropeptide FF receptor 1 from Homo sapiens (Human).